A 236-amino-acid chain; its full sequence is 2,3,4,5-tetrahydropyridine-2,6-dicarboxylate N-acetyltransferase (236 aa).

It belongs to the transferase hexapeptide repeat family. DapH subfamily.

It catalyses the reaction (S)-2,3,4,5-tetrahydrodipicolinate + acetyl-CoA + H2O = L-2-acetamido-6-oxoheptanedioate + CoA. It participates in amino-acid biosynthesis; L-lysine biosynthesis via DAP pathway; LL-2,6-diaminopimelate from (S)-tetrahydrodipicolinate (acetylase route): step 1/3. In terms of biological role, catalyzes the transfer of an acetyl group from acetyl-CoA to tetrahydrodipicolinate. In Bacillus licheniformis (strain ATCC 14580 / DSM 13 / JCM 2505 / CCUG 7422 / NBRC 12200 / NCIMB 9375 / NCTC 10341 / NRRL NRS-1264 / Gibson 46), this protein is 2,3,4,5-tetrahydropyridine-2,6-dicarboxylate N-acetyltransferase.